The chain runs to 274 residues: Putative pyruvate, phosphate dikinase regulatory protein 1 (274 aa).

149 to 156 (GISRTSKT) is an ADP binding site.

The protein belongs to the pyruvate, phosphate/water dikinase regulatory protein family. PDRP subfamily.

It catalyses the reaction N(tele)-phospho-L-histidyl/L-threonyl-[pyruvate, phosphate dikinase] + ADP = N(tele)-phospho-L-histidyl/O-phospho-L-threonyl-[pyruvate, phosphate dikinase] + AMP + H(+). The enzyme catalyses N(tele)-phospho-L-histidyl/O-phospho-L-threonyl-[pyruvate, phosphate dikinase] + phosphate + H(+) = N(tele)-phospho-L-histidyl/L-threonyl-[pyruvate, phosphate dikinase] + diphosphate. Its function is as follows. Bifunctional serine/threonine kinase and phosphorylase involved in the regulation of the pyruvate, phosphate dikinase (PPDK) by catalyzing its phosphorylation/dephosphorylation. The polypeptide is Putative pyruvate, phosphate dikinase regulatory protein 1 (Listeria welshimeri serovar 6b (strain ATCC 35897 / DSM 20650 / CCUG 15529 / CIP 8149 / NCTC 11857 / SLCC 5334 / V8)).